A 620-amino-acid polypeptide reads, in one-letter code: MSFDIAKYPTLALVDSTQELRLLPKESLPKLCDELRRYLLDSVSRSSGHFASGLGTVELTVALHYVYNTPFDQLIWDVGHQAYPHKILTGRRDKIGTIRQKGGLHPFPWRGESEYDVLSVGHSSTSISAGIGIAVAAEKEGKDRRTVCVIGDGAITAGMAFEAMNHAGDIRPDMLVILNDNEMSISENVGALNNHLAQLLSGKLYSSLREGGKKVFSGVPPIKELLKRTEEHIKGMVVPGTLFEELGFNYIGPVDGHDVMGLISTLKNMRDLKGPQFLHIMTKKGRGYEPAEKDPITFHAVPKFDPSSGCLPKSSGGLPGYSKIFGDWLCETAAKDSKLMAITPAMREGSGMVEFSRKFPDRYFDVAIAEQHAVTFAAGLAIGGYKPVVAIYSTFLQRAYDQVIHDVAIQKLPVMFAIDRAGIVGADGQTHQGAFDLSYLRCIPDMVIMTPSDENECRQMLFTGYHYNDGPTAVRYPRGNAQGVALTPLEKLPIGKGLVKRHGEKLAILNFGTLMPEAAKVAEALNATLVDMRFVKPLDDTLILEMAAQHDALVTLEENAIMGGAGSGVNEVLMAHRKPVPVLNIGLPDFFIPQGTQEEARAELGLDAAGIEAKIKAWQA.

Thiamine diphosphate is bound by residues histidine 80 and 121–123 (GHS). Aspartate 152 contacts Mg(2+). Thiamine diphosphate contacts are provided by residues 153-154 (GA), asparagine 181, tyrosine 288, and glutamate 370. Mg(2+) is bound at residue asparagine 181.

Belongs to the transketolase family. DXPS subfamily. Homodimer. Requires Mg(2+) as cofactor. The cofactor is thiamine diphosphate.

The catalysed reaction is D-glyceraldehyde 3-phosphate + pyruvate + H(+) = 1-deoxy-D-xylulose 5-phosphate + CO2. Its pathway is metabolic intermediate biosynthesis; 1-deoxy-D-xylulose 5-phosphate biosynthesis; 1-deoxy-D-xylulose 5-phosphate from D-glyceraldehyde 3-phosphate and pyruvate: step 1/1. Functionally, catalyzes the acyloin condensation reaction between C atoms 2 and 3 of pyruvate and glyceraldehyde 3-phosphate to yield 1-deoxy-D-xylulose-5-phosphate (DXP). This Salmonella agona (strain SL483) protein is 1-deoxy-D-xylulose-5-phosphate synthase.